The primary structure comprises 654 residues: Import motor subunit, mitochondrial (654 aa).

Residues 1-23 (MLAAKNILNRSSLSSSFRIATRL) constitute a mitochondrion transit peptide. At Thr-330 the chain carries Phosphothreonine. Residues 629–654 (EQLYKNDSNNNNNNNGNNAESGETKQ) are disordered. A compositionally biased stretch (low complexity) spans 637 to 646 (NNNNNNNGNN).

This sequence belongs to the heat shock protein 70 family. Component of the PAM complex, at least composed of SSC1 (mtHsp70), MGE1, TIM44, PAM16/TIM16, PAM17 and PAM18/TIM14. In the complex, SSC1 interacts directly with PAM18 and TIM44. Interacts with NAP1.

The protein localises to the mitochondrion matrix. The enzyme catalyses ATP + H2O = ADP + phosphate + H(+). In terms of biological role, essential component of the PAM complex, a complex required for the translocation of transit peptide-containing proteins from the inner membrane into the mitochondrial matrix in an ATP-dependent manner. Constitutes the ATP-driven core of the motor and binds the precursor preprotein. Required for the import of the processed frataxin homolog YFH1 into the mitochondrion. In Saccharomyces cerevisiae (strain ATCC 204508 / S288c) (Baker's yeast), this protein is Import motor subunit, mitochondrial.